The sequence spans 445 residues: Trigger factor (445 aa).

A PPIase FKBP-type domain is found at 171–256 (NDIVIIDFKG…VHVVNEVETP (86 aa)).

Belongs to the FKBP-type PPIase family. Tig subfamily.

The protein localises to the cytoplasm. The enzyme catalyses [protein]-peptidylproline (omega=180) = [protein]-peptidylproline (omega=0). Functionally, involved in protein export. Acts as a chaperone by maintaining the newly synthesized protein in an open conformation. Functions as a peptidyl-prolyl cis-trans isomerase. In Malacoplasma penetrans (strain HF-2) (Mycoplasma penetrans), this protein is Trigger factor.